Reading from the N-terminus, the 198-residue chain is Recombination protein RecR (198 aa).

Residues Cys57–Cys72 form a C4-type zinc finger. The Toprim domain occupies Ser80–Ser175.

The protein belongs to the RecR family.

Its function is as follows. May play a role in DNA repair. It seems to be involved in an RecBC-independent recombinational process of DNA repair. It may act with RecF and RecO. In Staphylococcus aureus (strain MRSA252), this protein is Recombination protein RecR.